The primary structure comprises 189 residues: Coatomer subunit zeta (189 aa).

It belongs to the adaptor complexes small subunit family. In terms of assembly, oligomeric complex that consists of at least the alpha, beta, beta', gamma, delta, epsilon and zeta subunits.

It is found in the cytoplasm. It localises to the golgi apparatus membrane. The protein resides in the cytoplasmic vesicle. Its subcellular location is the COPI-coated vesicle membrane. The coatomer is a cytosolic protein complex that binds to dilysine motifs and reversibly associates with Golgi non-clathrin-coated vesicles, which further mediate biosynthetic protein transport from the ER, via the Golgi up to the trans Golgi network. Coatomer complex is required for budding from Golgi membranes, and is essential for the retrograde Golgi-to-ER transport of dilysine-tagged proteins. The zeta subunit may be involved in regulating the coat assembly and, hence, the rate of biosynthetic protein transport due to its association-dissociation properties with the coatomer complex. This chain is Coatomer subunit zeta (RET3), found in Saccharomyces cerevisiae (strain ATCC 204508 / S288c) (Baker's yeast).